A 406-amino-acid polypeptide reads, in one-letter code: telomere-associated protein 1 (406 aa).

A compositionally biased stretch (basic and acidic residues) spans 20–40 (EHHNGSHDNDDKDKEDKEKQN). Residues 20 to 46 (EHHNGSHDNDDKDKEDKEKQNTEAVAA) are disordered. The region spanning 147–206 (TTRRVRLRWTQEETADLMEGCKVHGVGNWKKILTDPRFRFNNRTAVDLKDRFRTCFPEDY) is the HTH myb-type domain. Positions 175 to 202 (WKKILTDPRFRFNNRTAVDLKDRFRTCF) form a DNA-binding region, H-T-H motif. The region spanning 234–288 (VNRKERRVFTPEEDERLLNGFMKHGPSWSNIQRDNELGLFERRSTDLRDRFRNAF) is the Myb-like domain. The segment at 368 to 389 (TQELQPQAHSRKQQGGDGLKEE) is disordered.

Its subcellular location is the nucleus. It localises to the chromosome. The protein localises to the telomere. Its function is as follows. Telomere-binding protein that mediates telomere clustering by promoting formation of head-to-head dimers of DNA molecules through the telomeric tracts. Binds specifically 5'-TTAGTCAGGG-3' repeats in subtelomeric regions. The polypeptide is telomere-associated protein 1 (Yarrowia lipolytica (strain CLIB 122 / E 150) (Yeast)).